The chain runs to 546 residues: UDP-glycosyltransferase FPY2 (546 aa).

The N-terminal stretch at 1–20 is a signal peptide; sequence MSLPKAQILVVVTVGGSTNS. A helical membrane pass occupies residues 517 to 537; the sequence is LNNIDVALLFFILLGIISWIT.

It belongs to the glycosyltransferase 28 family.

It localises to the membrane. Its pathway is secondary metabolite biosynthesis. In terms of biological role, UDP-glycosyltransferase; part of the gene cluster that mediates the biosynthesis of the gamma-pyrones fusapyrone (FPY) and deoxyfusapyrone (dFPY). FPY is an undecaketide and thus likely synthesized by the polyketide synthase FPY1 from acetyl-CoA functioning as starter unit and the addition of 10 malonyl-CoA extender units by successive Claisen-condensations. Next to this, FPY shares some rare features: C-glycosylated 4-deoxyglucose at C-3, a gem-dimethyl group at C-13, and an alpha-beta to beta-gamma double bond shift at C-20. During FPY biosynthesis mono-C-methyl groups are transferred to the tetra-, penta-, hexa- and heptaketide, while two C-methyl groups are transferred to the nonaketide, suggesting that the CMet domain is programmed to selectively catalyze two successive C-alpha-methylation reactions of the nonaketide, while other alpha-carbons are non- or mono-methylated only. While the origin of the 4'-deoxyglucose moiety remains opaque, its transfer to C-3 is most likely mediated by the C-glycosyltransferase FPY2. Next to this, the hydroxyl group present at C-33 and discriminating between FPY and dFPY, is likely to be installed by the cytochrome P450 monooxygenase FPY7. No putative function can be predicted for the remaining genes FPY3-FPY6. This is UDP-glycosyltransferase FPY2 from Fusarium mangiferae (Mango malformation disease fungus).